The sequence spans 442 residues: MKSLYIKTYGCQMNVYDSILMENIIKPLGFNVVNDVEKADLVILNTCHIREKAAEKLYSELGKIHSSRKNKEITIVAAGCVAQAEGEEIFRRAPFVDIVVGPQSITTLPELIVKASRSKGHVINTDFPKVMKFDRLSDECYGNSQGSSAFLSIQEGCDKFCTFCVVPYTRGAEYSRPVNEIFREALKLVANGAKEINLLGQNVNAYHGEYEGEVWDLGKLISHIAKIEKLERIRYTTSHPRDMHESLYLAHAEAPKLMPFIHLPVQSGSNKILRAMNRKYTTEEYLEIIERFRKLKPKIEFSSDFIVGFPGETEKDFEGTIKLVERVRYAQAYSFKYSTRPGTPGAERKDQVPEKVKTERLLHLQKLINKQQLEFNQSMVGKTIPVLFSNKKGKHQNQIIGKSPYMQSVCIDDPEDKCRDKIVNVRILEAWQNSLLGRELQE.

Positions 2–117 (KSLYIKTYGC…LPELIVKASR (116 aa)) constitute an MTTase N-terminal domain. Residues C11, C47, C80, C157, C161, and C164 each coordinate [4Fe-4S] cluster. The 232-residue stretch at 143–374 (NSQGSSAFLS…QKLINKQQLE (232 aa)) folds into the Radical SAM core domain. One can recognise a TRAM domain in the interval 377–441 (QSMVGKTIPV…QNSLLGRELQ (65 aa)).

Belongs to the methylthiotransferase family. MiaB subfamily. Monomer. The cofactor is [4Fe-4S] cluster.

It is found in the cytoplasm. It catalyses the reaction N(6)-dimethylallyladenosine(37) in tRNA + (sulfur carrier)-SH + AH2 + 2 S-adenosyl-L-methionine = 2-methylsulfanyl-N(6)-dimethylallyladenosine(37) in tRNA + (sulfur carrier)-H + 5'-deoxyadenosine + L-methionine + A + S-adenosyl-L-homocysteine + 2 H(+). Functionally, catalyzes the methylthiolation of N6-(dimethylallyl)adenosine (i(6)A), leading to the formation of 2-methylthio-N6-(dimethylallyl)adenosine (ms(2)i(6)A) at position 37 in tRNAs that read codons beginning with uridine. This Wolbachia sp. subsp. Brugia malayi (strain TRS) protein is tRNA-2-methylthio-N(6)-dimethylallyladenosine synthase.